A 229-amino-acid polypeptide reads, in one-letter code: Small ribosomal subunit protein uS5 (229 aa).

The S5 DRBM domain maps to 61–124 (LEEQVLDVKL…AHAKLSLIKV (64 aa)).

Belongs to the universal ribosomal protein uS5 family. As to quaternary structure, part of the 30S ribosomal subunit. Contacts protein S4.

With S4 and S12 plays an important role in translational accuracy. In Methanococcus maripaludis (strain C6 / ATCC BAA-1332), this protein is Small ribosomal subunit protein uS5.